The following is a 66-amino-acid chain: Large ribosomal subunit protein bL35 (66 aa).

Positions 1–26 are enriched in basic residues; that stretch reads MPKMKTHRGSAKRFKKTASGKLKRGH. The interval 1–28 is disordered; that stretch reads MPKMKTHRGSAKRFKKTASGKLKRGHAY.

This sequence belongs to the bacterial ribosomal protein bL35 family.

The sequence is that of Large ribosomal subunit protein bL35 from Geobacillus thermodenitrificans (strain NG80-2).